The following is a 192-amino-acid chain: Imidazole glycerol phosphate synthase subunit HisH (192 aa).

Residues 1–192 (MIVIVDYGLG…QAIQGGFIND (192 aa)) enclose the Glutamine amidotransferase type-1 domain. The active-site Nucleophile is the cysteine 77. Active-site residues include histidine 169 and glutamate 171.

Heterodimer of HisH and HisF.

The protein resides in the cytoplasm. It carries out the reaction 5-[(5-phospho-1-deoxy-D-ribulos-1-ylimino)methylamino]-1-(5-phospho-beta-D-ribosyl)imidazole-4-carboxamide + L-glutamine = D-erythro-1-(imidazol-4-yl)glycerol 3-phosphate + 5-amino-1-(5-phospho-beta-D-ribosyl)imidazole-4-carboxamide + L-glutamate + H(+). It catalyses the reaction L-glutamine + H2O = L-glutamate + NH4(+). It functions in the pathway amino-acid biosynthesis; L-histidine biosynthesis; L-histidine from 5-phospho-alpha-D-ribose 1-diphosphate: step 5/9. In terms of biological role, IGPS catalyzes the conversion of PRFAR and glutamine to IGP, AICAR and glutamate. The HisH subunit catalyzes the hydrolysis of glutamine to glutamate and ammonia as part of the synthesis of IGP and AICAR. The resulting ammonia molecule is channeled to the active site of HisF. The sequence is that of Imidazole glycerol phosphate synthase subunit HisH from Staphylococcus aureus (strain COL).